Reading from the N-terminus, the 675-residue chain is MWKKFFGQLQRIGKALMLPVAILPAAGLLLALGNAFQGDALQSLMPFIKAEGFQNVAKMMEGAGGIIFDNLAIIFALGVAIGLASGDGVAAIAAFVGFIVLNKTMGMFLGVTPEKAADAATGFANVLGIPTLQTGVFGGIIIGALAAWCYNKFYNISLPSYLGFFAGKRFVPIMMATCSFILAFPMAIIWPSIQGGLNAFSEGLLASNTGLAVFLFGFIKRLLIPFGLHHIFHAPFWFEFGSYKNAAGQIIHGDQRIFIEQIRDNVPLTAGKFMQGEFPVMMFGLPAAALAIYQTAKKENKKVVAGLMLSGALTSFLTGITEPLEFSFLFVAPLLFFIHAVLDGLSFLILYLLDLHLGYTFSGGFIDFFLLGILPNKTQWWLVIPVGLVYAAIYYIIFRFLIVKFNFKTPGREDKEVKSSNVAASELPFKVLDAMGGKANIKHLDACITRLRVEVNDKAKVDVQELKDLGASGVLEVGNNMQAIFGPKSDQIKHDMQQIMDGKITSPEETTVTEEGDKETAEIAAAGGGVVYAPIKGEVVDISEVPDKVFSEKMMGDGIAIKPETGEVVAPFDGVVKMVFPTKHAIGLESKDGIELLIHFGLETVKLEGKGFDILVKENDNIVLGQPLMKVDLDYIKEHADSTITPIVVTNLNGRTMEVLQHGEVKQGDKVILVK.

Positions 3 to 414 (KKFFGQLQRI…FNFKTPGRED (412 aa)) constitute a PTS EIIC type-1 domain. Helical transmembrane passes span 16–36 (LMLP…GNAF), 63–83 (AGGI…AIGL), 89–109 (VAAI…GMFL), 126–146 (VLGI…GALA), 170–190 (FVPI…AIIW), 199–219 (AFSE…FGFI), 273–293 (FMQG…LAIY), 303–323 (VVAG…ITEP), 329–349 (LFVA…SFLI), 355–375 (LHLG…GILP), and 383–403 (VIPV…FLIV). A PTS EIIB type-1 domain is found at 425-506 (SELPFKVLDA…QQIMDGKITS (82 aa)). The active-site Phosphocysteine intermediate; for EIIB activity is the Cys447. A PTS EIIA type-1 domain is found at 547-651 (DKVFSEKMMG…STITPIVVTN (105 aa)). Residue His599 is the Tele-phosphohistidine intermediate; for EIIA activity of the active site.

The protein localises to the cell membrane. It carries out the reaction N(pros)-phospho-L-histidyl-[protein] + D-glucose(out) = D-glucose 6-phosphate(in) + L-histidyl-[protein]. Inhibited by 2-deoxyglucose and methyl beta-D-glucoside, but not by methyl alpha-D-glucoside, p-nitrophenyl alpha-D-glucoside, o-nitrophenyl beta-D-glucoside and salicin. The phosphoenolpyruvate-dependent sugar phosphotransferase system (sugar PTS), a major carbohydrate active transport system, catalyzes the phosphorylation of incoming sugar substrates concomitantly with their translocation across the cell membrane. This system is involved in glucose transport. Cannot transport galactose, fructose, mannose, cellobiose, sucrose, maltose, lactose, melibiose and trehalose, as well as N-acetylglucosamine. In Staphylococcus carnosus (strain TM300), this protein is PTS system glucose-specific EIICBA component (ptsG).